Here is a 92-residue protein sequence, read N- to C-terminus: uncharacterized protein (92 aa).

The protein to M.jannaschii MJ0782.1.

This is an uncharacterized protein from Methanothermobacter thermautotrophicus (strain ATCC 29096 / DSM 1053 / JCM 10044 / NBRC 100330 / Delta H) (Methanobacterium thermoautotrophicum).